The following is a 326-amino-acid chain: Lipoyl synthase (326 aa).

Residues Cys-56, Cys-61, Cys-67, Cys-82, Cys-86, Cys-89, and Ser-298 each coordinate [4Fe-4S] cluster. Residues Trp-68–Ser-287 form the Radical SAM core domain.

This sequence belongs to the radical SAM superfamily. Lipoyl synthase family. Requires [4Fe-4S] cluster as cofactor.

The protein resides in the cytoplasm. It carries out the reaction [[Fe-S] cluster scaffold protein carrying a second [4Fe-4S](2+) cluster] + N(6)-octanoyl-L-lysyl-[protein] + 2 oxidized [2Fe-2S]-[ferredoxin] + 2 S-adenosyl-L-methionine + 4 H(+) = [[Fe-S] cluster scaffold protein] + N(6)-[(R)-dihydrolipoyl]-L-lysyl-[protein] + 4 Fe(3+) + 2 hydrogen sulfide + 2 5'-deoxyadenosine + 2 L-methionine + 2 reduced [2Fe-2S]-[ferredoxin]. It participates in protein modification; protein lipoylation via endogenous pathway; protein N(6)-(lipoyl)lysine from octanoyl-[acyl-carrier-protein]: step 2/2. Functionally, catalyzes the radical-mediated insertion of two sulfur atoms into the C-6 and C-8 positions of the octanoyl moiety bound to the lipoyl domains of lipoate-dependent enzymes, thereby converting the octanoylated domains into lipoylated derivatives. The polypeptide is Lipoyl synthase (Streptomyces griseus subsp. griseus (strain JCM 4626 / CBS 651.72 / NBRC 13350 / KCC S-0626 / ISP 5235)).